A 147-amino-acid chain; its full sequence is Large ribosomal subunit protein bL9 (147 aa).

Belongs to the bacterial ribosomal protein bL9 family.

Its function is as follows. Binds to the 23S rRNA. The chain is Large ribosomal subunit protein bL9 from Bacteroides fragilis (strain ATCC 25285 / DSM 2151 / CCUG 4856 / JCM 11019 / LMG 10263 / NCTC 9343 / Onslow / VPI 2553 / EN-2).